The chain runs to 648 residues: MSESKVYPVKAHISNGALLDKAGYEAMYRASVQDPDAFWGEQGKILDWMKPYTRVKNTSYDPGHVSIKWYEDGLLNVSANCLDRHLAQRGDKVAIIWEGDNPAEDRKLTYRELHTEVCKFANVLKAQGVHRGDVVCLYMPMVPEAAIAMLACTRIGAVHSIVFGGFSPEALAGRIIDSGSSIVITADEGLRGGRPVPLKKNVDEALTNPETKVNNVIVLKRTGGNIAWHNHRDIWWHDAVATVSADCPPEAMGAEDPLFILYTSGSTGKPKGVLHTTGGYLVYATLTFKYIFDYHEEDIYWCTADVGWVTGHSYLVYGPLANGATTIMFEGVPNYPATNRMSQVVDKHQVSILYTAPTAIRALMAKGNEAVADTSRSSLRIMGSVGEPINPEAWEWYYRTIGEERCPIVDTWWQTETGGILISPLPGVTDLKPGSATRPFFGVQPALVDNMGEPLEGATEGNLVITDSWPGQMRTVFGDHERFEQTYFSTFPGRYFTGDGARRDEDGYYWITGRVDDVLNVSGHRMGTAEIESALVSHPKIAEAAVVGVPHEIKGQGIYAYVTLIAGEEPSRELHKEVKEWVRKEIGAIATPDVIHWAEGLPKTRSGKIMRRILRKIATGETDSLGDISTLADPGVVDKLIREKSEAA.

CoA is bound by residues 191–194 (RGGR), Thr-310, and Asn-334. ATP is bound by residues 386 to 388 (GEP), 410 to 415 (DTWWQT), Asp-499, and Arg-514. Residue Ser-522 coordinates CoA. Position 525 (Arg-525) interacts with ATP. Positions 536, 538, and 541 each coordinate Mg(2+). Arg-583 contributes to the CoA binding site. N6-acetyllysine is present on Lys-608.

Belongs to the ATP-dependent AMP-binding enzyme family. Mg(2+) serves as cofactor. In terms of processing, acetylated. Deacetylation by the SIR2-homolog deacetylase activates the enzyme.

It catalyses the reaction acetate + ATP + CoA = acetyl-CoA + AMP + diphosphate. Catalyzes the conversion of acetate into acetyl-CoA (AcCoA), an essential intermediate at the junction of anabolic and catabolic pathways. AcsA undergoes a two-step reaction. In the first half reaction, AcsA combines acetate with ATP to form acetyl-adenylate (AcAMP) intermediate. In the second half reaction, it can then transfer the acetyl group from AcAMP to the sulfhydryl group of CoA, forming the product AcCoA. The polypeptide is Acetyl-coenzyme A synthetase (Aeromonas hydrophila subsp. hydrophila (strain ATCC 7966 / DSM 30187 / BCRC 13018 / CCUG 14551 / JCM 1027 / KCTC 2358 / NCIMB 9240 / NCTC 8049)).